The sequence spans 549 residues: MESYKEVWLKAGLIYALNLLSSGNLKPVEIGLGERYFYVDIDSPDILTLDEAKDFAKYNQYDYQLVEDNRGSITVVYNGHQIKLNGGKPNQNVHPKYFQILSISVHHPSPEKQYVRVLGVGFEKEEQLKDYLNWLEKVSEYDHRIIGDRLDLFSFPEEAPPGVVLFHPNGQIIRKEMMRFMEEINDSMGYKEVYTSHVYRSLLWKISGHYDYYKDKMLLFEIDNDEELGIKPMNCPAHILIYKSKVRSYKDLPIRFSEFGHVYRWEKKGELYGLLRVRGFTQDDGHIFLREDQIKDEIKLLMKKTLDVLAIFGFKGDDVRVNLSTRPDESIGTDEQWNKATDALISALNELNIKYEVKEKEGAFYGPKIDFDIRDSLSRWWQLSTIQVDFNLPERFKLEYVDKDGSKKRPVMVHRAIYGSIDRFMAILLEHFRGKLPTWLSPIQVRVLPITDEIEDYGNSLMAKLRENKIRVDMDSGEETLSKRIKKAYDDGVPYLIIVGRKEKDEGKVTVRARGNIEIRGINVEKFVQALVEEIRNKDLNQSAVSKLK.

Residues 142–437 are catalytic; it reads DHRIIGDRLD…LLEHFRGKLP (296 aa). Cysteine 235, histidine 286, and histidine 414 together coordinate Zn(2+).

It belongs to the class-II aminoacyl-tRNA synthetase family. Homodimer. Probably interacts with its editing subunit. Zn(2+) is required as a cofactor.

The protein localises to the cytoplasm. It carries out the reaction tRNA(Thr) + L-threonine + ATP = L-threonyl-tRNA(Thr) + AMP + diphosphate + H(+). Its function is as follows. Catalyzes the attachment of threonine to tRNA(Thr) in a two-step reaction: L-threonine is first activated by ATP to form Thr-AMP and then transferred to the acceptor end of tRNA(Thr). Also activates L-serine and transfers it to tRNA(Thr) but cannot deacylate incorrectly charged amino acid; unlike most archaea the editing function is found in a freestanding protein. The polypeptide is Threonine--tRNA ligase catalytic subunit (Sulfolobus acidocaldarius (strain ATCC 33909 / DSM 639 / JCM 8929 / NBRC 15157 / NCIMB 11770)).